Here is a 460-residue protein sequence, read N- to C-terminus: Cysteine--tRNA ligase (460 aa).

Cys-28 is a Zn(2+) binding site. The 'HIGH' region signature appears at 30-40; sequence MTVYDYCHLGH. The Zn(2+) site is built by Cys-209, His-234, and Glu-238. Residues 266–270 carry the 'KMSKS' region motif; that stretch reads KMSKS. Lys-269 is an ATP binding site.

It belongs to the class-I aminoacyl-tRNA synthetase family. Monomer. It depends on Zn(2+) as a cofactor.

It localises to the cytoplasm. The catalysed reaction is tRNA(Cys) + L-cysteine + ATP = L-cysteinyl-tRNA(Cys) + AMP + diphosphate. This Pseudomonas putida (strain ATCC 47054 / DSM 6125 / CFBP 8728 / NCIMB 11950 / KT2440) protein is Cysteine--tRNA ligase.